The sequence spans 233 residues: Zinc metalloproteinase recombinant fibrinogenase II (233 aa).

The Peptidase M12B domain occupies 19–215; that stretch reads KYVETVFVVD…HNPECIDNEP (197 aa). Ca(2+) contacts are provided by glutamate 22 and aspartate 106. Intrachain disulfides connect cysteine 130/cysteine 210, cysteine 170/cysteine 194, and cysteine 172/cysteine 177. Histidine 155 is a binding site for Zn(2+). Glutamate 156 is a catalytic residue. Histidine 159 and histidine 165 together coordinate Zn(2+). Residue asparagine 193 is glycosylated (N-linked (GlcNAc...) asparagine). Residues cysteine 210, asparagine 213, asparagine 228, leucine 230, and glutamate 232 each contribute to the Ca(2+) site.

The protein belongs to the venom metalloproteinase (M12B) family. P-III subfamily. It depends on Zn(2+) as a cofactor. In terms of tissue distribution, expressed by the venom gland.

Its subcellular location is the secreted. Its activity is regulated as follows. Inhibited by PMSF and EDTA. Slightly inhibited by Cu(2+) and Zn(2+). Not inhibited by aprotinin, SBTI, Ca(2+), Mg(2+), Na(+) and K(+). In terms of biological role, snake venom zinc metalloprotease that acts at several levels. It has direct fibrino(geno)lytic activity (Aalpha chain of fibrinogen is cleaved quickly, Bbeta chain slowly, and gamma chain even more slowly) and degradation of TNF-alpha. These activities permit to protect against sepsis and disseminated intravascular coagulation. It inhibits ADP-induced platelet aggregation in human platelet-rich plasma (IC(50)=65.4 ug/ml). It decreases the activity of complement by degrading human C5, C6 and C9 in vitro, decreasing serum levels of C1q, C3 and C4 in rat, and inhibiting the MAC deposition on HUVECs membrane. This inhibition of complement protects against hyperacute rejection that is the main barrier in xenotransplantation. Has preference for Lys at the P1 position. Cleaves insulin B chain at '36-Val-|-Glu-37', '39-Leu-|-Tyr-40', and '48-Phe-|-Phe-49' bonds. Also cleaves fibronectin and type IV collagen. This chain is Zinc metalloproteinase recombinant fibrinogenase II, found in Deinagkistrodon acutus (Hundred-pace snake).